A 178-amino-acid chain; its full sequence is Large ribosomal subunit protein uL6 (178 aa).

The protein belongs to the universal ribosomal protein uL6 family. Part of the 50S ribosomal subunit.

Functionally, this protein binds to the 23S rRNA, and is important in its secondary structure. It is located near the subunit interface in the base of the L7/L12 stalk, and near the tRNA binding site of the peptidyltransferase center. This chain is Large ribosomal subunit protein uL6, found in Shouchella clausii (strain KSM-K16) (Alkalihalobacillus clausii).